A 309-amino-acid chain; its full sequence is tRNA pseudouridine synthase B (309 aa).

Residue D51 is the Nucleophile of the active site.

Belongs to the pseudouridine synthase TruB family. Type 1 subfamily.

The enzyme catalyses uridine(55) in tRNA = pseudouridine(55) in tRNA. Functionally, responsible for synthesis of pseudouridine from uracil-55 in the psi GC loop of transfer RNAs. The polypeptide is tRNA pseudouridine synthase B (Coxiella burnetii (strain Dugway 5J108-111)).